The sequence spans 513 residues: Maturase K (513 aa).

Belongs to the intron maturase 2 family. MatK subfamily.

It is found in the plastid. It localises to the chloroplast. Usually encoded in the trnK tRNA gene intron. Probably assists in splicing its own and other chloroplast group II introns. This chain is Maturase K, found in Panicum capillare (Witchgrass).